A 278-amino-acid chain; its full sequence is D-arabinitol 2-dehydrogenase [ribulose-forming] (278 aa).

NADP(+) is bound by residues Leu-28 and Asn-49. The Proton donor role is filled by Ser-166. 4 residues coordinate NADP(+): Tyr-181, Lys-185, Ile-214, and Thr-216. The active-site Proton acceptor is the Tyr-181. Residue Lys-185 is the Lowers pKa of active site Tyr of the active site.

Belongs to the short-chain dehydrogenases/reductases (SDR) family.

The enzyme catalyses D-arabinitol + NAD(+) = D-ribulose + NADH + H(+). The protein operates within carbohydrate metabolism; D-arabinitol metabolism. This is D-arabinitol 2-dehydrogenase [ribulose-forming] (ARDH) from Scheffersomyces stipitis (strain ATCC 58785 / CBS 6054 / NBRC 10063 / NRRL Y-11545) (Yeast).